The chain runs to 125 residues: 14 kDa phosphohistidine phosphatase (125 aa).

Ala2 carries the N-acetylalanine modification. Lys21 is a binding site for substrate. The Proton acceptor role is filled by His53. Position 94–96 (94–96) interacts with substrate; sequence SMG.

Monomer.

The protein localises to the cytoplasm. The catalysed reaction is N(pros)-phospho-L-histidyl-[protein] + H2O = L-histidyl-[protein] + phosphate. It catalyses the reaction N(tele)-phospho-L-histidyl-[protein] + H2O = L-histidyl-[protein] + phosphate. In terms of biological role, exhibits phosphohistidine phosphatase activity. Functionally, may have a significant involvement in neuronal signaling. The polypeptide is 14 kDa phosphohistidine phosphatase (PHPT1) (Oryctolagus cuniculus (Rabbit)).